Reading from the N-terminus, the 169-residue chain is NADH dehydrogenase [ubiquinone] 1 alpha subcomplex assembly factor 2 (169 aa).

The interval Thr116–Gln169 is disordered. The residue at position 134 (Ser134) is a Phosphoserine. The span at Ala146–Pro156 shows a compositional bias: polar residues.

The protein belongs to the complex I NDUFA12 subunit family. As to quaternary structure, interacts with ARMC9. As to expression, highly expressed in ESCC cells. Also expressed in heart, skeletal muscle, liver, and in fibroblasts.

The protein resides in the mitochondrion. Functionally, acts as a molecular chaperone for mitochondrial complex I assembly. Complex I functions in the transfer of electrons from NADH to the respiratory chain. The immediate electron acceptor for the enzyme is believed to be ubiquinone. Is involved in the initial steps of cilia formation, including removal of CP110 from the mother centrioles, docking of membrane vesicles to the mother centrioles, and establishment of the transition zone. This Homo sapiens (Human) protein is NADH dehydrogenase [ubiquinone] 1 alpha subcomplex assembly factor 2 (NDUFAF2).